The chain runs to 291 residues: Mitochondrial fission factor (291 aa).

At 1–271 the chain is on the cytoplasmic side; it reads MAEISRIQYE…ENKERAKREM (271 aa). Threonine 89 carries the post-translational modification Phosphothreonine. A disordered region spans residues 106-134; sequence LERPLPTPQSEESRAVGRLKRERSMSENA. Phosphoserine is present on residues serine 129, serine 131, and serine 146. Threonine 149 is subject to Phosphothreonine. Phosphoserine occurs at positions 151, 178, 182, and 244. The stretch at 240-271 forms a coiled coil; that stretch reads VDAASLRRQIIKLNRRLQLLEEENKERAKREM. The helical; Anchor for type IV membrane protein transmembrane segment at 272-289 threads the bilayer; sequence VMYSITVAFWLLNSWLWF. Residues 290–291 are Mitochondrial intermembrane-facing; that stretch reads RR.

Belongs to the Tango11 family. Homodimer. Interacts with DNM1L. Interacts with C11orf65/MFI; the interaction inhibits MFF interaction with DNM1L.

It is found in the mitochondrion outer membrane. Its subcellular location is the peroxisome. It localises to the cytoplasmic vesicle. The protein resides in the secretory vesicle. The protein localises to the synaptic vesicle. In terms of biological role, plays a role in mitochondrial and peroxisomal fission. Promotes the recruitment and association of the fission mediator dynamin-related protein 1 (DNM1L) to the mitochondrial surface. May be involved in regulation of synaptic vesicle membrane dynamics by recruitment of DNM1L to clathrin-containing vesicles. The polypeptide is Mitochondrial fission factor (Mff) (Mus musculus (Mouse)).